The sequence spans 114 residues: Non-specific lipid-transfer protein 1 (114 aa).

The N-terminal stretch at 1–25 (MIKGLAITVVAVLAVVQLLARPSDA) is a signal peptide. Cystine bridges form between Cys29–Cys76, Cys39–Cys53, Cys54–Cys99, and Cys74–Cys113.

This sequence belongs to the plant LTP family. Expressed in seeds and, at very low levels, in pulp of fruit (at protein level).

Its function is as follows. Plant non-specific lipid-transfer proteins transfer phospholipids as well as galactolipids across membranes. May play a role in wax or cutin deposition in the cell walls of expanding epidermal cells and certain secretory tissues. This chain is Non-specific lipid-transfer protein 1, found in Actinidia chinensis var. chinensis (Chinese soft-hair kiwi).